Reading from the N-terminus, the 100-residue chain is Large ribosomal subunit protein uL23 (100 aa).

Belongs to the universal ribosomal protein uL23 family. In terms of assembly, part of the 50S ribosomal subunit. Contacts protein L29, and trigger factor when it is bound to the ribosome.

Functionally, one of the early assembly proteins it binds 23S rRNA. One of the proteins that surrounds the polypeptide exit tunnel on the outside of the ribosome. Forms the main docking site for trigger factor binding to the ribosome. In Synechococcus sp. (strain WH7803), this protein is Large ribosomal subunit protein uL23.